The sequence spans 205 residues: Urease accessory protein UreG (205 aa).

14-21 (GPVGSGKT) contacts GTP.

The protein belongs to the SIMIBI class G3E GTPase family. UreG subfamily. In terms of assembly, homodimer. UreD, UreF and UreG form a complex that acts as a GTP-hydrolysis-dependent molecular chaperone, activating the urease apoprotein by helping to assemble the nickel containing metallocenter of UreC. The UreE protein probably delivers the nickel.

Its subcellular location is the cytoplasm. Facilitates the functional incorporation of the urease nickel metallocenter. This process requires GTP hydrolysis, probably effectuated by UreG. In Escherichia coli, this protein is Urease accessory protein UreG.